Reading from the N-terminus, the 331-residue chain is Biotin synthase (331 aa).

Positions N53–R272 constitute a Radical SAM core domain. C68, C72, and C75 together coordinate [4Fe-4S] cluster. C112, C143, C203, and R276 together coordinate [2Fe-2S] cluster.

The protein belongs to the radical SAM superfamily. Biotin synthase family. As to quaternary structure, homodimer. It depends on [4Fe-4S] cluster as a cofactor. [2Fe-2S] cluster serves as cofactor.

The enzyme catalyses (4R,5S)-dethiobiotin + (sulfur carrier)-SH + 2 reduced [2Fe-2S]-[ferredoxin] + 2 S-adenosyl-L-methionine = (sulfur carrier)-H + biotin + 2 5'-deoxyadenosine + 2 L-methionine + 2 oxidized [2Fe-2S]-[ferredoxin]. It participates in cofactor biosynthesis; biotin biosynthesis; biotin from 7,8-diaminononanoate: step 2/2. Catalyzes the conversion of dethiobiotin (DTB) to biotin by the insertion of a sulfur atom into dethiobiotin via a radical-based mechanism. The chain is Biotin synthase from Bradyrhizobium diazoefficiens (strain JCM 10833 / BCRC 13528 / IAM 13628 / NBRC 14792 / USDA 110).